The chain runs to 372 residues: 4-hydroxy-3-methylbut-2-en-1-yl diphosphate synthase (flavodoxin) (372 aa).

Positions 270, 273, 305, and 312 each coordinate [4Fe-4S] cluster.

It belongs to the IspG family. The cofactor is [4Fe-4S] cluster.

It carries out the reaction (2E)-4-hydroxy-3-methylbut-2-enyl diphosphate + oxidized [flavodoxin] + H2O + 2 H(+) = 2-C-methyl-D-erythritol 2,4-cyclic diphosphate + reduced [flavodoxin]. Its pathway is isoprenoid biosynthesis; isopentenyl diphosphate biosynthesis via DXP pathway; isopentenyl diphosphate from 1-deoxy-D-xylulose 5-phosphate: step 5/6. In terms of biological role, converts 2C-methyl-D-erythritol 2,4-cyclodiphosphate (ME-2,4cPP) into 1-hydroxy-2-methyl-2-(E)-butenyl 4-diphosphate. This chain is 4-hydroxy-3-methylbut-2-en-1-yl diphosphate synthase (flavodoxin), found in Salmonella typhi.